Consider the following 302-residue polypeptide: Gigasin-6 (302 aa).

An N-terminal signal peptide occupies residues 1 to 22 (MSSRNLLYSSVVLFLVLFYCHG). A helical membrane pass occupies residues 75–95 (ITTDTLFGLGGISALFANILI).

Component of the organic matrix of calcified shell layers.

It localises to the membrane. This chain is Gigasin-6, found in Magallana gigas (Pacific oyster).